We begin with the raw amino-acid sequence, 445 residues long: NAD-specific glutamate dehydrogenase (445 aa).

Lys-124 is an active-site residue. Gly-235–Trp-241 serves as a coordination point for NAD(+).

The protein belongs to the Glu/Leu/Phe/Val dehydrogenases family. Homohexamer.

It catalyses the reaction L-glutamate + NAD(+) + H2O = 2-oxoglutarate + NH4(+) + NADH + H(+). In Bacteroides fragilis (strain YCH46), this protein is NAD-specific glutamate dehydrogenase (gdhB).